The following is a 149-amino-acid chain: Large ribosomal subunit protein bL9 (149 aa).

Belongs to the bacterial ribosomal protein bL9 family.

Binds to the 23S rRNA. This is Large ribosomal subunit protein bL9 from Proteus mirabilis (strain HI4320).